Consider the following 165-residue polypeptide: NADH-quinone oxidoreductase subunit I (165 aa).

2 consecutive 4Fe-4S ferredoxin-type domains span residues 66 to 98 (HRLTKNEKGDLKCVACDMCATACPANCIFITAT) and 109 to 138 (SKFTIDLLECVFCGLCVEACPKDAIRMDTG). 8 residues coordinate [4Fe-4S] cluster: C78, C81, C84, C88, C118, C121, C124, and C128.

This sequence belongs to the complex I 23 kDa subunit family. In terms of assembly, NDH-1 is composed of 14 different subunits. Subunits NuoA, H, J, K, L, M, N constitute the membrane sector of the complex. [4Fe-4S] cluster serves as cofactor.

Its subcellular location is the cell inner membrane. It carries out the reaction a quinone + NADH + 5 H(+)(in) = a quinol + NAD(+) + 4 H(+)(out). Functionally, NDH-1 shuttles electrons from NADH, via FMN and iron-sulfur (Fe-S) centers, to quinones in the respiratory chain. The immediate electron acceptor for the enzyme in this species is believed to be ubiquinone. Couples the redox reaction to proton translocation (for every two electrons transferred, four hydrogen ions are translocated across the cytoplasmic membrane), and thus conserves the redox energy in a proton gradient. In Campylobacter fetus subsp. fetus (strain 82-40), this protein is NADH-quinone oxidoreductase subunit I.